Here is a 1265-residue protein sequence, read N- to C-terminus: Guanine nucleotide exchange factor SDC25 (1265 aa).

The SH3 domain occupies 26–97; that stretch reads QPIDVVECTY…PPSFTRSILN (72 aa). Disordered regions lie at residues 409–454 and 623–648; these read IPAS…DTIW and LNLD…DEYE. The span at 416 to 428 shows a compositional bias: low complexity; the sequence is TSCSSETSHHSPS. The 133-residue stretch at 782–914 folds into the N-terminal Ras-GEF domain; sequence SNNRIKGGSK…LLKEVNQKFK (133 aa). A Ras-GEF domain is found at 952–1199; the sequence is DPVLFATQLT…YQLSLIIEPK (248 aa). Residues 1201-1252 are disordered; that stretch reads RKKVVPNSNSNNKSQEKSRDDQTDEGKTSTKKDRFSKFQLHKTKKKAPKVSK. Residues 1214–1236 are compositionally biased toward basic and acidic residues; that stretch reads SQEKSRDDQTDEGKTSTKKDRFS. The segment covering 1239-1252 has biased composition (basic residues); that stretch reads QLHKTKKKAPKVSK.

In terms of biological role, promotes the exchange of Ras-bound GDP by GTP. This chain is Guanine nucleotide exchange factor SDC25 (SDC25), found in Saccharomyces cerevisiae (strain AWRI1631) (Baker's yeast).